The chain runs to 382 residues: Chaperone protein DnaJ (382 aa).

One can recognise a J domain in the interval 5–69 (DLYGVLGVAK…QKRANYDQSG (65 aa)). Positions 104–123 (QFFGGGGGQRNPNAPRPGRD) are disordered. The CR-type zinc-finger motif lies at 138–220 (GKKTKIKYNR…CGGSGHEEER (83 aa)). Residues C151, C154, C168, C171, C194, C197, C208, and C211 each coordinate Zn(2+). CXXCXGXG motif repeat units follow at residues 151–158 (CHTCGGNG), 168–175 (CHQCGGSG), 194–201 (CPVCHGTG), and 208–215 (CPTCGGSG). Positions 358–382 (ASGESVTGSGKGNLFNKMRDKFNEN) are disordered.

This sequence belongs to the DnaJ family. In terms of assembly, homodimer. Requires Zn(2+) as cofactor.

The protein resides in the cytoplasm. Its function is as follows. Participates actively in the response to hyperosmotic and heat shock by preventing the aggregation of stress-denatured proteins and by disaggregating proteins, also in an autonomous, DnaK-independent fashion. Unfolded proteins bind initially to DnaJ; upon interaction with the DnaJ-bound protein, DnaK hydrolyzes its bound ATP, resulting in the formation of a stable complex. GrpE releases ADP from DnaK; ATP binding to DnaK triggers the release of the substrate protein, thus completing the reaction cycle. Several rounds of ATP-dependent interactions between DnaJ, DnaK and GrpE are required for fully efficient folding. Also involved, together with DnaK and GrpE, in the DNA replication of plasmids through activation of initiation proteins. The polypeptide is Chaperone protein DnaJ (Levilactobacillus brevis (strain ATCC 367 / BCRC 12310 / CIP 105137 / JCM 1170 / LMG 11437 / NCIMB 947 / NCTC 947) (Lactobacillus brevis)).